The chain runs to 247 residues: Caffeoyl-CoA O-methyltransferase 2 (247 aa).

K21 lines the substrate pocket. Residues T63, E85, 87-88 (GV), S93, D111, and A140 each bind S-adenosyl-L-methionine. Substrate is bound at residue D163. D163 serves as a coordination point for a divalent metal cation. D165 is a binding site for S-adenosyl-L-methionine. A divalent metal cation-binding residues include D189 and N190. N194 provides a ligand contact to substrate.

This sequence belongs to the class I-like SAM-binding methyltransferase superfamily. Cation-dependent O-methyltransferase family. CCoAMT subfamily. Requires a divalent metal cation as cofactor.

It catalyses the reaction (E)-caffeoyl-CoA + S-adenosyl-L-methionine = (E)-feruloyl-CoA + S-adenosyl-L-homocysteine + H(+). Its pathway is aromatic compound metabolism; phenylpropanoid biosynthesis. In terms of biological role, methylates caffeoyl-CoA to feruloyl-CoA and 5-hydroxyferuloyl-CoA to sinapoyl-CoA. Plays a role in the synthesis of feruloylated polysaccharides. Involved in the reinforcement of the plant cell wall. Also involved in the responding to wounding or pathogen challenge by the increased formation of cell wall-bound ferulic acid polymers. This chain is Caffeoyl-CoA O-methyltransferase 2 (CCOAOMT2), found in Populus trichocarpa (Western balsam poplar).